Here is a 126-residue protein sequence, read N- to C-terminus: MPEPAKSAPAPKKGSKKAVTKTQKKDGKKRRKSRKESYAIYVYKVLKQVHPDTGISSKAMSIMNSFVNDVFERIAGEASRLAHYNKRSTITSREIQTAVRLLLPGELAKHAVSEGTKAVTKYTSAK.

Positions 1–12 (MPEPAKSAPAPK) are enriched in low complexity. The segment at 1 to 35 (MPEPAKSAPAPKKGSKKAVTKTQKKDGKKRRKSRK) is disordered. Residues K6 and K13 each carry the N6-acetyllysine modification. Position 15 is a phosphoserine (S15). N6-acetyllysine is present on residues K16 and K21. Residue S113 is glycosylated (O-linked (GlcNAc) serine). K121 participates in a covalent cross-link: Glycyl lysine isopeptide (Lys-Gly) (interchain with G-Cter in ubiquitin).

It belongs to the histone H2B family. In terms of assembly, the nucleosome is a histone octamer containing two molecules each of H2A, H2B, H3 and H4 assembled in one H3-H4 heterotetramer and two H2A-H2B heterodimers. The octamer wraps approximately 147 bp of DNA. In terms of processing, monoubiquitination of Lys-121 by BRE1 gives a specific tag for epigenetic transcriptional activation and is also prerequisite for histone H3 'Lys-4' and 'Lys-79' methylation. Phosphorylated on Ser-15 during developmentally programmed apoptosis; which may facilitate apoptotic chromatin condensation. Post-translationally, glcNAcylation at Ser-113 promotes monoubiquitination of Lys-121. It fluctuates in response to extracellular glucose, and associates with transcribed genes.

It localises to the nucleus. It is found in the chromosome. Functionally, core component of nucleosome. Nucleosomes wrap and compact DNA into chromatin, limiting DNA accessibility to the cellular machineries which require DNA as a template. Histones thereby play a central role in transcription regulation, DNA repair, DNA replication and chromosomal stability. DNA accessibility is regulated via a complex set of post-translational modifications of histones, also called histone code, and nucleosome remodeling. This is Histone H2B 1.1 from Xenopus laevis (African clawed frog).